A 245-amino-acid chain; its full sequence is Membrane-associated progesterone-binding protein 4 (245 aa).

The chain crosses the membrane as a helical span at residues 6–26; the sequence is RFLLSPFVGVTFIVVLVSLYF. Residues 39–138 form the Cytochrome b5 heme-binding domain; that stretch reads KRLFSAEELA…RTYTPVGKLV (100 aa). The steroid-binding stretch occupies residues 45-138; it reads EELALYNGTD…RTYTPVGKLV (94 aa).

Belongs to the cytochrome b5 family. MAPR subfamily.

It localises to the membrane. This chain is Membrane-associated progesterone-binding protein 4, found in Arabidopsis thaliana (Mouse-ear cress).